Here is a 556-residue protein sequence, read N- to C-terminus: Undecaprenyl phosphate-alpha-4-amino-4-deoxy-L-arabinose arabinosyl transferase (556 aa).

10 helical membrane-spanning segments follow: residues 88 to 108, 116 to 136, 179 to 199, 207 to 227, 258 to 278, 296 to 316, 319 to 339, 355 to 375, 384 to 404, and 410 to 430; these read FASV…AMML, LLAA…TYSV, FMTK…PVAL, LLLF…PWAL, APFW…LALL, FFLL…KGKL, YILP…SGLA, IVFG…IIVP, LTII…AVSL, and WGYL…GSIP.

Belongs to the glycosyltransferase 83 family.

It localises to the cell inner membrane. It catalyses the reaction 4-amino-4-deoxy-alpha-L-arabinopyranosyl di-trans,octa-cis-undecaprenyl phosphate + lipid IVA = lipid IIA + di-trans,octa-cis-undecaprenyl phosphate.. It participates in lipopolysaccharide metabolism; 4-amino-4-deoxy-beta-L-arabinose-lipid A biosynthesis. In terms of biological role, catalyzes the transfer of the L-Ara4N moiety of the glycolipid undecaprenyl phosphate-alpha-L-Ara4N to lipid A. The modified arabinose is attached to lipid A and is required for resistance to polymyxin and cationic antimicrobial peptides. This is Undecaprenyl phosphate-alpha-4-amino-4-deoxy-L-arabinose arabinosyl transferase from Pectobacterium atrosepticum (strain SCRI 1043 / ATCC BAA-672) (Erwinia carotovora subsp. atroseptica).